Here is a 244-residue protein sequence, read N- to C-terminus: tRNA (guanine-N(1)-)-methyltransferase (244 aa).

S-adenosyl-L-methionine contacts are provided by residues Gly-113 and 133 to 138; that span reads IGDYVL.

It belongs to the RNA methyltransferase TrmD family. In terms of assembly, homodimer.

It localises to the cytoplasm. It catalyses the reaction guanosine(37) in tRNA + S-adenosyl-L-methionine = N(1)-methylguanosine(37) in tRNA + S-adenosyl-L-homocysteine + H(+). In terms of biological role, specifically methylates guanosine-37 in various tRNAs. This is tRNA (guanine-N(1)-)-methyltransferase from Bacillus cereus (strain B4264).